Reading from the N-terminus, the 378-residue chain is Protein KlaB (378 aa).

The protein belongs to the TelA family.

Its function is as follows. Belongs to the kla operon, which is associated with cryptic tellurite resistance, and IncW plasmid fertility inhibition. The protein is Protein KlaB (klaB) of Escherichia coli.